The primary structure comprises 616 residues: DNA mismatch repair protein MutL (616 aa).

The protein belongs to the DNA mismatch repair MutL/HexB family.

Its function is as follows. This protein is involved in the repair of mismatches in DNA. It is required for dam-dependent methyl-directed DNA mismatch repair. May act as a 'molecular matchmaker', a protein that promotes the formation of a stable complex between two or more DNA-binding proteins in an ATP-dependent manner without itself being part of a final effector complex. This is DNA mismatch repair protein MutL from Syntrophus aciditrophicus (strain SB).